The sequence spans 181 residues: UPF0316 protein Bcer98_2136 (181 aa).

The next 3 helical transmembrane spans lie at 6–26 (LIFV…ILLV), 32–52 (SAAG…GIVF), and 58–78 (WMNI…GGYI).

This sequence belongs to the UPF0316 family.

The protein localises to the cell membrane. The protein is UPF0316 protein Bcer98_2136 of Bacillus cytotoxicus (strain DSM 22905 / CIP 110041 / 391-98 / NVH 391-98).